We begin with the raw amino-acid sequence, 352 residues long: Uricase (352 aa).

The segment at M1–Y32 is disordered. The segment covering M23–Y32 has biased composition (basic and acidic residues). Residues K41 and T86 each act as charge relay system in the active site. Urate-binding residues include T86, D87, F214, R231, V279, Q280, and N306. H308 serves as the catalytic Charge relay system. A Microbody targeting signal motif is present at residues S350 to L352.

Belongs to the uricase family. Malpighian tubules.

The protein localises to the peroxisome. The catalysed reaction is urate + O2 + H2O = 5-hydroxyisourate + H2O2. It participates in purine metabolism; urate degradation; (S)-allantoin from urate: step 1/3. Its activity is regulated as follows. Repressed by 20-hydroxyecdysone. Catalyzes the oxidation of uric acid to 5-hydroxyisourate, which is further processed to form (S)-allantoin. The chain is Uricase (Uro) from Drosophila melanogaster (Fruit fly).